A 319-amino-acid polypeptide reads, in one-letter code: Dehydrogenase/reductase SDR family member 9 (319 aa).

Positions 1–17 (MLFWLLVLLILCGFLWN) are cleaved as a signal peptide. NAD(+) contacts are provided by residues 34-58 (ITGCDTGFGNLAARTFDKKGFHVIA) and aspartate 83. Residue serine 164 coordinates substrate. Tyrosine 176 acts as the Proton acceptor in catalysis. Lysine 180 lines the NAD(+) pocket.

The protein belongs to the short-chain dehydrogenases/reductases (SDR) family. In terms of assembly, homotetramer.

It is found in the microsome membrane. It localises to the endoplasmic reticulum membrane. The catalysed reaction is 3beta-hydroxy-5alpha-pregnane-20-one + NAD(+) = 5alpha-pregnane-3,20-dione + NADH + H(+). It carries out the reaction 17beta-hydroxy-5alpha-androstan-3-one + NAD(+) = 5alpha-androstan-3,17-dione + NADH + H(+). It catalyses the reaction androsterone + NAD(+) = 5alpha-androstan-3,17-dione + NADH + H(+). The enzyme catalyses 5alpha-androstane-3alpha,17beta-diol + NAD(+) = 17beta-hydroxy-5alpha-androstan-3-one + NADH + H(+). The catalysed reaction is all-trans-retinol + NAD(+) = all-trans-retinal + NADH + H(+). It carries out the reaction 3alpha-hydroxy-5alpha-pregnan-20-one + NAD(+) = 5alpha-pregnane-3,20-dione + NADH + H(+). 3-alpha-hydroxysteroid dehydrogenase that converts 3-alpha-tetrahydroprogesterone (allopregnanolone) to dihydroxyprogesterone and 3-alpha-androstanediol to dihydroxyprogesterone. Also plays a role in the biosynthesis of retinoic acid from retinaldehyde. Can utilize both NADH and NADPH. The sequence is that of Dehydrogenase/reductase SDR family member 9 (DHRS9) from Bos taurus (Bovine).